The following is a 127-amino-acid chain: MLKSLLVIAIGASLGAWLRWLLGMKLNALFPTIPPGTVVANMVGGYIIGLAIAFLAASPSLSPEWRLLIITGFCGGLTTFSTFSAETVALIQEGRLLWALGSISLHVVGSLAMTAAGLLSYQMIGTR.

Transmembrane regions (helical) follow at residues S4–M24, T37–A57, L68–V88, and L96–A116. Positions 75 and 78 each coordinate Na(+).

Belongs to the fluoride channel Fluc/FEX (TC 1.A.43) family.

The protein resides in the cell inner membrane. It catalyses the reaction fluoride(in) = fluoride(out). Na(+) is not transported, but it plays an essential structural role and its presence is essential for fluoride channel function. Fluoride-specific ion channel. Important for reducing fluoride concentration in the cell, thus reducing its toxicity. This chain is Fluoride-specific ion channel FluC, found in Pseudomonas syringae pv. maculicola.